We begin with the raw amino-acid sequence, 352 residues long: Holliday junction branch migration complex subunit RuvB (352 aa).

The large ATPase domain (RuvB-L) stretch occupies residues 4–185 (PDRLISAVSG…FGIVQRLEFY (182 aa)). Residues Ile-24, Arg-25, Gly-66, Lys-69, Thr-70, Thr-71, 132 to 134 (EDF), Arg-175, Tyr-185, and Arg-222 contribute to the ATP site. Thr-70 is a binding site for Mg(2+). Residues 186 to 256 (NVEDLATIVS…IADKALNLLD (71 aa)) form a small ATPAse domain (RuvB-S) region. Residues 259–352 (ERGFDHLDRR…TDLFTSEDGN (94 aa)) form a head domain (RuvB-H) region. DNA contacts are provided by Arg-295, Arg-314, and Arg-319.

Belongs to the RuvB family. In terms of assembly, homohexamer. Forms an RuvA(8)-RuvB(12)-Holliday junction (HJ) complex. HJ DNA is sandwiched between 2 RuvA tetramers; dsDNA enters through RuvA and exits via RuvB. An RuvB hexamer assembles on each DNA strand where it exits the tetramer. Each RuvB hexamer is contacted by two RuvA subunits (via domain III) on 2 adjacent RuvB subunits; this complex drives branch migration. In the full resolvosome a probable DNA-RuvA(4)-RuvB(12)-RuvC(2) complex forms which resolves the HJ.

The protein localises to the cytoplasm. It carries out the reaction ATP + H2O = ADP + phosphate + H(+). Functionally, the RuvA-RuvB-RuvC complex processes Holliday junction (HJ) DNA during genetic recombination and DNA repair, while the RuvA-RuvB complex plays an important role in the rescue of blocked DNA replication forks via replication fork reversal (RFR). RuvA specifically binds to HJ cruciform DNA, conferring on it an open structure. The RuvB hexamer acts as an ATP-dependent pump, pulling dsDNA into and through the RuvAB complex. RuvB forms 2 homohexamers on either side of HJ DNA bound by 1 or 2 RuvA tetramers; 4 subunits per hexamer contact DNA at a time. Coordinated motions by a converter formed by DNA-disengaged RuvB subunits stimulates ATP hydrolysis and nucleotide exchange. Immobilization of the converter enables RuvB to convert the ATP-contained energy into a lever motion, pulling 2 nucleotides of DNA out of the RuvA tetramer per ATP hydrolyzed, thus driving DNA branch migration. The RuvB motors rotate together with the DNA substrate, which together with the progressing nucleotide cycle form the mechanistic basis for DNA recombination by continuous HJ branch migration. Branch migration allows RuvC to scan DNA until it finds its consensus sequence, where it cleaves and resolves cruciform DNA. The sequence is that of Holliday junction branch migration complex subunit RuvB from Pseudomonas aeruginosa (strain LESB58).